The primary structure comprises 334 residues: DCN1-like protein 3 (334 aa).

In terms of domain architecture, DCUN1 spans 112-301 (VSHQTLSKLF…LFDDFVDYEK (190 aa)). The disordered stretch occupies residues 308–334 (SGIHDDDNNNDDPLQSHVKAEDPGLVS). The segment covering 325–334 (VKAEDPGLVS) has biased composition (basic and acidic residues).

Its subcellular location is the cell membrane. Promotes neddylation of cullin components of SCF-type E3 ubiquitin ligase complexes and thus regulates SCF-type complex activity. Function promotes cell proliferation. This Drosophila melanogaster (Fruit fly) protein is DCN1-like protein 3.